A 401-amino-acid chain; its full sequence is 2-amino-3-carboxymuconate-6-semialdehyde decarboxylase (401 aa).

Zn(2+) is bound by residues H18 and H20. Residue R59 coordinates substrate. Zn(2+)-binding residues include H234 and D352.

This sequence belongs to the metallo-dependent hydrolases superfamily. ACMSD family. In terms of assembly, monomer.

It catalyses the reaction 2-amino-3-carboxymuconate 6-semialdehyde + H(+) = 2-aminomuconate 6-semialdehyde + CO2. Its pathway is secondary metabolite metabolism; quinolate metabolism. In terms of biological role, converts alpha-amino-beta-carboxymuconate-epsilon-semialdehyde (ACMS) to alpha-aminomuconate semialdehyde (AMS). The protein is 2-amino-3-carboxymuconate-6-semialdehyde decarboxylase of Caenorhabditis elegans.